The sequence spans 317 residues: Ribonuclease 3-like protein 2 (317 aa).

Residues 1 to 26 form a disordered region; sequence MAPPPAMKPASRKRGPPAPDPVELPP. Pro residues predominate over residues 16–26; the sequence is PPAPDPVELPP. Positions 37-185 constitute an RNase III domain; it reads AARVERLLRY…IAAAVYVDCK (149 aa). The Mg(2+) site is built by Glu74, Asp171, and Glu174. The region spanning 211–274 is the DRBM domain; the sequence is QPVTMLHELC…ARDATRKLAG (64 aa).

The cofactor is Mg(2+). Mn(2+) serves as cofactor.

Its function is as follows. Cleaves double-stranded RNA (dsRNA). In Oryza sativa subsp. japonica (Rice), this protein is Ribonuclease 3-like protein 2.